Here is a 361-residue protein sequence, read N- to C-terminus: Beta-hexosaminidase (361 aa).

Substrate is bound by residues aspartate 69, arginine 77, arginine 144, and 174–175; that span reads KH. Histidine 187 (proton donor/acceptor) is an active-site residue. The active-site Nucleophile is aspartate 258.

Belongs to the glycosyl hydrolase 3 family. NagZ subfamily.

It localises to the cytoplasm. The catalysed reaction is Hydrolysis of terminal non-reducing N-acetyl-D-hexosamine residues in N-acetyl-beta-D-hexosaminides.. Its pathway is cell wall biogenesis; peptidoglycan recycling. Its function is as follows. Plays a role in peptidoglycan recycling by cleaving the terminal beta-1,4-linked N-acetylglucosamine (GlcNAc) from peptide-linked peptidoglycan fragments, giving rise to free GlcNAc, anhydro-N-acetylmuramic acid and anhydro-N-acetylmuramic acid-linked peptides. This Neisseria gonorrhoeae (strain NCCP11945) protein is Beta-hexosaminidase.